The following is a 203-amino-acid chain: Orotate phosphoribosyltransferase (203 aa).

Residues Arg-94, Lys-95, Lys-98, His-100, and 119–127 contribute to the 5-phospho-alpha-D-ribose 1-diphosphate site; that span reads DDVATTGGS. Orotate contacts are provided by Thr-123 and Arg-151.

Belongs to the purine/pyrimidine phosphoribosyltransferase family. PyrE subfamily. Homodimer. Mg(2+) serves as cofactor.

The enzyme catalyses orotidine 5'-phosphate + diphosphate = orotate + 5-phospho-alpha-D-ribose 1-diphosphate. It functions in the pathway pyrimidine metabolism; UMP biosynthesis via de novo pathway; UMP from orotate: step 1/2. Its function is as follows. Catalyzes the transfer of a ribosyl phosphate group from 5-phosphoribose 1-diphosphate to orotate, leading to the formation of orotidine monophosphate (OMP). The protein is Orotate phosphoribosyltransferase of Staphylothermus marinus (strain ATCC 43588 / DSM 3639 / JCM 9404 / F1).